Here is a 512-residue protein sequence, read N- to C-terminus: Alpha-1B-glycoprotein (512 aa).

The signal sequence occupies residues 1-18 (MSLLATVLLLWGFTLGPG). Ig-like V-type domains lie at 22–126 (MLDS…VTGK), 127–219 (EPLP…MYAS), 220–312 (QAPP…PVEL), 313–415 (MWSD…LRVN), and 416–512 (GPPP…IVEG). Asn44, Asn89, and Asn192 each carry an N-linked (GlcNAc...) asparagine glycan. 5 disulfides stabilise this stretch: Cys49/Cys96, Cys153/Cys195, Cys245/Cys292, Cys343/Cys392, and Cys441/Cys488. Residues Asn369, Asn381, Asn389, and Asn485 are each glycosylated (N-linked (GlcNAc...) asparagine).

Interacts with CRISP3. In terms of tissue distribution, expressed in the liver hepatocytes of male and female GH transgenic mice and in the liver of female, but not of male, non-transgenic mice.

The protein resides in the secreted. This Mus musculus (Mouse) protein is Alpha-1B-glycoprotein (A1bg).